The primary structure comprises 358 residues: Replication factor C subunit 5 (358 aa).

It belongs to the activator 1 small subunits family. As to quaternary structure, heteropentamer of subunits rfc1, rfc2, rfc3, rfc4 and rfc5 that forms a complex (RFC) with PCNA in the presence of ATP. Two other complexes exist where rfc1 can be replaced by either ctf18 or elg1 to form the ctf18-RFC or the elg1-RFC complexes respectively.

Its subcellular location is the nucleus. In terms of biological role, the elongation of primed DNA templates by DNA polymerase delta and epsilon requires the action of the accessory proteins PCNA and activator 1. This chain is Replication factor C subunit 5 (rfc5), found in Schizosaccharomyces pombe (strain 972 / ATCC 24843) (Fission yeast).